The sequence spans 363 residues: S-adenosylmethionine:tRNA ribosyltransferase-isomerase (363 aa).

Belongs to the QueA family. Monomer.

It is found in the cytoplasm. The catalysed reaction is 7-aminomethyl-7-carbaguanosine(34) in tRNA + S-adenosyl-L-methionine = epoxyqueuosine(34) in tRNA + adenine + L-methionine + 2 H(+). Its pathway is tRNA modification; tRNA-queuosine biosynthesis. Its function is as follows. Transfers and isomerizes the ribose moiety from AdoMet to the 7-aminomethyl group of 7-deazaguanine (preQ1-tRNA) to give epoxyqueuosine (oQ-tRNA). This chain is S-adenosylmethionine:tRNA ribosyltransferase-isomerase, found in Pasteurella multocida (strain Pm70).